Here is a 389-residue protein sequence, read N- to C-terminus: Probable inactive purple acid phosphatase 29 (389 aa).

The signal sequence occupies residues 1–34; the sequence is MADNRRRRSLFDFLLFSVFLGLACLCLSPIPATA. An N-linked (GlcNAc...) asparagine glycan is attached at N80. N136 contacts substrate. A Zn(2+)-binding site is contributed by N136. N-linked (GlcNAc...) asparagine glycosylation is found at N191 and N267. H303 is a binding site for Zn(2+). 303–305 contacts substrate; it reads HDH. Residue H305 coordinates Fe cation. The N-linked (GlcNAc...) asparagine glycan is linked to N380.

This sequence belongs to the metallophosphoesterase superfamily. Purple acid phosphatase family. As to quaternary structure, homodimer. Fe cation is required as a cofactor. It depends on Zn(2+) as a cofactor. Expressed in roots, stems, leaves, flowers and siliques.

The protein resides in the secreted. The sequence is that of Probable inactive purple acid phosphatase 29 (PAP29) from Arabidopsis thaliana (Mouse-ear cress).